We begin with the raw amino-acid sequence, 884 residues long: DNA replication licensing factor mcm2 (884 aa).

Positions 1 to 16 (MADSSESFNIATSPRT) are enriched in polar residues. 2 disordered regions span residues 1–61 (MADS…IGDA) and 120–151 (LYDS…EDEE). The segment covering 47–58 (PREEEEDGEELI) has biased composition (acidic residues). Residues 314 to 340 (CNKCNFILGPFFQSQNQEVKPGSCPEC) form a C4-type zinc finger. Positions 458 to 664 (IGERIFASIA…VQDEMLARFV (207 aa)) constitute an MCM domain. ADP contacts are provided by Ser-515 and Gln-516. The Arginine finger signature appears at 640 to 643 (SRFD).

Belongs to the MCM family. In terms of assembly, component of the mcm2-7 complex (RLF-M). The complex forms a toroidal hexameric ring with the proposed subunit order mcm2-mcm6-mcm4-mcm7-mcm3-mcm5. Component of the replisome complex. Component of the CMG helicase complex, composed of the mcm2-7 complex, the GINS complex and cdc45. Post-translationally, may be in a phosphorylated state in the mitotic mcm complex. Phosphorylated in the interphase mcm complex. Phosphorylated by the cdc7-dbf4 and cdc7-dbf4b complexes.

The protein resides in the nucleus. Its subcellular location is the chromosome. It carries out the reaction ATP + H2O = ADP + phosphate + H(+). Acts as a component of the MCM2-7 complex (MCM complex) which is the replicative helicase essential for 'once per cell cycle' DNA replication initiation and elongation in eukaryotic cells. Core component of CDC45-MCM-GINS (CMG) helicase, the molecular machine that unwinds template DNA during replication, and around which the replisome is built. The active ATPase sites in the MCM2-7 ring are formed through the interaction surfaces of two neighboring subunits such that a critical structure of a conserved arginine finger motif is provided in trans relative to the ATP-binding site of the Walker A box of the adjacent subunit. The six ATPase active sites, however, are likely to contribute differentially to the complex helicase activity. Required for the entry in S phase and for cell division. In Xenopus tropicalis (Western clawed frog), this protein is DNA replication licensing factor mcm2.